Consider the following 72-residue polypeptide: Translation initiation factor IF-1 (72 aa).

Positions 1 to 72 (MAKDDVIEID…DKGRITFRYK (72 aa)) constitute an S1-like domain.

The protein belongs to the IF-1 family. As to quaternary structure, component of the 30S ribosomal translation pre-initiation complex which assembles on the 30S ribosome in the order IF-2 and IF-3, IF-1 and N-formylmethionyl-tRNA(fMet); mRNA recruitment can occur at any time during PIC assembly.

It is found in the cytoplasm. Functionally, one of the essential components for the initiation of protein synthesis. Stabilizes the binding of IF-2 and IF-3 on the 30S subunit to which N-formylmethionyl-tRNA(fMet) subsequently binds. Helps modulate mRNA selection, yielding the 30S pre-initiation complex (PIC). Upon addition of the 50S ribosomal subunit IF-1, IF-2 and IF-3 are released leaving the mature 70S translation initiation complex. This chain is Translation initiation factor IF-1, found in Campylobacter jejuni subsp. doylei (strain ATCC BAA-1458 / RM4099 / 269.97).